The sequence spans 1228 residues: Multimerin-1 (1228 aa).

The signal sequence occupies residues 1–19 (MKGARLFVLLSSLWSGGIG). N-linked (GlcNAc...) asparagine glycosylation occurs at asparagine 21. The segment at 68 to 98 (TPEARTSEDSLLKSTLPPSETSAPAEGVRNQ) is disordered. The span at 79–89 (LKSTLPPSETS) shows a compositional bias: polar residues. Asparagine 97, asparagine 114, and asparagine 120 each carry an N-linked (GlcNAc...) asparagine glycan. The N-linked (GlcNAc...) (complex) asparagine glycan is linked to asparagine 136. The interval 157-200 (NTVGGTGGIGGVGGTGGVGNRAPRETYLSRGDSSSSQRTDYQKS) is disordered. Residues 160-175 (GGTGGIGGVGGTGGVG) are compositionally biased toward gly residues. Residues 186-188 (RGD) carry the Cell attachment site motif. A compositionally biased stretch (polar residues) spans 187 to 200 (GDSSSSQRTDYQKS). One can recognise an EMI domain in the interval 207–282 (GKNWCAYVHT…PGYSGPKCQL (76 aa)). 3 disulfides stabilise this stretch: cysteine 211/cysteine 272, cysteine 238/cysteine 245, and cysteine 271/cysteine 280. O-linked (Fuc) threonine glycosylation is present at threonine 216. The O-linked (Fuc) threonine glycan is linked to threonine 265. Coiled coils occupy residues 333 to 365 (MKLT…KVSE) and 400 to 430 (NDMQ…IQKV). A glycan (N-linked (GlcNAc...) asparagine) is linked at asparagine 344. 16 N-linked (GlcNAc...) asparagine glycosylation sites follow: asparagine 431, asparagine 507, asparagine 541, asparagine 576, asparagine 618, asparagine 680, asparagine 729, asparagine 783, asparagine 816, asparagine 828, asparagine 840, asparagine 921, asparagine 933, asparagine 942, asparagine 981, and asparagine 1020. The stretch at 503 to 523 (YESLNKTLSKLKEVHEQLLST) forms a coiled coil. Coiled-coil stretches lie at residues 580 to 650 (SLEM…EILQ) and 675 to 726 (RKKI…EMED). Residues 819–869 (NFQKMYQMFNETTSQVRKYQQNMSHLEEKLLLTTKISKNFETRLQDIESKV) are a coiled coil. Positions 1041-1077 (EYSSCSRHPCQNGGTCINGRTSFTCACRHPFTGDNCT) constitute an EGF-like domain. 3 disulfide bridges follow: cysteine 1045-cysteine 1056, cysteine 1050-cysteine 1065, and cysteine 1067-cysteine 1076. Residue threonine 1055 is glycosylated (O-linked (Fuc) threonine). N-linked (GlcNAc...) asparagine glycosylation is present at asparagine 1075. One can recognise a C1q domain in the interval 1096–1228 (RYAPMVAFFA…TFSGYLLYRT (133 aa)).

Multimeric. Composed of varying sized, disulfide-linked multimers, the smallest of which is a homotrimer. Proteolysis of the promultimerin in the N-terminal region, leads to the mature p155 form that is stored in platelets. Interacts with factor V/Va. In terms of processing, the N-terminus is blocked. Extensively N-glycosylated. Post-translationally, O-fucosylated within the EMI domain (at Thr-216 and Thr-265) by FUT10/POFUT3 and FUT11/POFUT4. O-fucosylation at Thr-216 and Thr-1055 are required for facilitating protein folding and secretion. In terms of tissue distribution, synthesized by endothelial cells and megakaryocytes. Stored in platelet alpha granules and endothelial cell Weibel-Palade bodies, following activation of these cells, it is released and attached to megakaryocytes, platelets, endothelium and subendothelium of blood vessels. Not found in plasma. Found in vascular tissues such as placenta, lung, and liver.

It localises to the secreted. Carrier protein for platelet (but not plasma) factor V/Va. Plays a role in the storage and stabilization of factor V in platelets. Upon release following platelet activation, may limit platelet and plasma factor Va-dependent thrombin generation. Ligand for integrin alpha-IIb/beta-3 and integrin alpha-V/beta-3 on activated platelets, and may function as an extracellular matrix or adhesive protein. This chain is Multimerin-1 (MMRN1), found in Homo sapiens (Human).